The primary structure comprises 202 residues: UPF0301 protein Meso_0753 (202 aa).

It belongs to the UPF0301 (AlgH) family.

The sequence is that of UPF0301 protein Meso_0753 from Chelativorans sp. (strain BNC1).